We begin with the raw amino-acid sequence, 388 residues long: Zinc finger protein 1 (388 aa).

The span at 1–19 (MSSIPNINWNDPNNGKSNT) shows a compositional bias: polar residues. Disordered stretches follow at residues 1–120 (MSSI…QQPL), 157–219 (LQQR…QQWD), and 236–311 (SSIQ…KPIT). The segment covering 20 to 38 (SRQSQPQPQLPSNVSPPNS) has biased composition (low complexity). Polar residues-rich tracts occupy residues 52–67 (YGSS…NPNT) and 88–97 (YPVQQTAQQR). Composition is skewed to low complexity over residues 102-120 (LQQV…QQPL) and 157-172 (LQQR…KSQL). Positions 173–203 (NEQNAMMSASTQQYPVQDFTNPYPNAQNPAE) are enriched in polar residues. 2 stretches are compositionally biased toward low complexity: residues 204 to 217 (QQQQ…QSQQ) and 236 to 259 (SSIQ…KQQQ). Residues 268 to 278 (KKKPGRKPKLR) are compositionally biased toward basic residues. Over residues 282–294 (ESSSETPQVPKTA) the composition is skewed to polar residues. Positions 318–345 (CLTCRQRKKRCCETRPRCTECTRLRLNC) form a DNA-binding region, zn(2)-C6 fungal-type. A disordered region spans residues 348-367 (PKPGTEHKNKPKDQKDDENT). Positions 351 to 367 (GTEHKNKPKDQKDDENT) are enriched in basic and acidic residues.

Its subcellular location is the nucleus. Its function is as follows. Perhaps a regulatory role. May be involved in transcriptional activation. The chain is Zinc finger protein 1 (CZF1) from Candida albicans (strain WO-1) (Yeast).